We begin with the raw amino-acid sequence, 348 residues long: Fasciculation and elongation protein zeta-2 (348 aa).

Residues 11 to 40 (YEFQEPAGSVQEQENCNASPEAGAGAHAGG) are disordered. 3 positions are modified to phosphoserine: S130, S171, and S190. Residues 206–280 (ERVKRLSVSE…TAKKKKKLKS (75 aa)) adopt a coiled-coil conformation. The disordered stretch occupies residues 265 to 296 (QKEHKETAKKKKKLKSGSSQNGRSERSHMPGT).

It belongs to the zygin family. In terms of assembly, homodimer; disulfide-linked. May form heterodimers with FEZ1. Interacts with synaptotagmin.

Functionally, involved in axonal outgrowth and fasciculation. This is Fasciculation and elongation protein zeta-2 (Fez2) from Mus musculus (Mouse).